The following is an 86-amino-acid chain: Putative membrane protein insertion efficiency factor (86 aa).

The interval 66 to 86 (FSKGGFDPVPPHDGVPGKKED) is disordered.

It belongs to the UPF0161 family.

Its subcellular location is the cell inner membrane. In terms of biological role, could be involved in insertion of integral membrane proteins into the membrane. In Chlorobium luteolum (strain DSM 273 / BCRC 81028 / 2530) (Pelodictyon luteolum), this protein is Putative membrane protein insertion efficiency factor.